The primary structure comprises 638 residues: Threonine--tRNA ligase (638 aa).

Positions 1–61 (MPNITLPDGS…EADTPLAIVT (61 aa)) constitute a TGS domain. The catalytic stretch occupies residues 242-533 (DHRKLGRLLD…LIEHYAGALP (292 aa)). Residues C333, H384, and H510 each contribute to the Zn(2+) site.

Belongs to the class-II aminoacyl-tRNA synthetase family. As to quaternary structure, homodimer. Zn(2+) serves as cofactor.

Its subcellular location is the cytoplasm. The catalysed reaction is tRNA(Thr) + L-threonine + ATP = L-threonyl-tRNA(Thr) + AMP + diphosphate + H(+). Catalyzes the attachment of threonine to tRNA(Thr) in a two-step reaction: L-threonine is first activated by ATP to form Thr-AMP and then transferred to the acceptor end of tRNA(Thr). Also edits incorrectly charged L-seryl-tRNA(Thr). This chain is Threonine--tRNA ligase, found in Aromatoleum aromaticum (strain DSM 19018 / LMG 30748 / EbN1) (Azoarcus sp. (strain EbN1)).